The following is a 310-amino-acid chain: Small ribosomal subunit protein uS2 (310 aa).

Residues 249 to 272 (WERDLLEGEKAEKKDDAEAAEKPA) show a composition bias toward basic and acidic residues. Residues 249–310 (WERDLLEGEK…EAPAADAEQA (62 aa)) are disordered. Residues 273–310 (EAPAAEAPAAEAAEAPAAEAAPAEEPAAEAPAADAEQA) show a composition bias toward low complexity.

It belongs to the universal ribosomal protein uS2 family.

This is Small ribosomal subunit protein uS2 (rpsB) from Streptomyces coelicolor (strain ATCC BAA-471 / A3(2) / M145).